A 107-amino-acid polypeptide reads, in one-letter code: Thiosulfate sulfurtransferase GlpE (107 aa).

The Rhodanese domain occupies 19–107; that stretch reads KDHNARMVDI…WNKAGLPVEK (89 aa). The Cysteine persulfide intermediate role is filled by C67.

Belongs to the GlpE family.

Its subcellular location is the cytoplasm. The enzyme catalyses thiosulfate + hydrogen cyanide = thiocyanate + sulfite + 2 H(+). It catalyses the reaction thiosulfate + [thioredoxin]-dithiol = [thioredoxin]-disulfide + hydrogen sulfide + sulfite + 2 H(+). Functionally, transferase that catalyzes the transfer of sulfur from thiosulfate to thiophilic acceptors such as cyanide or dithiols. May function in a CysM-independent thiosulfate assimilation pathway by catalyzing the conversion of thiosulfate to sulfite, which can then be used for L-cysteine biosynthesis. The chain is Thiosulfate sulfurtransferase GlpE from Aliivibrio salmonicida (strain LFI1238) (Vibrio salmonicida (strain LFI1238)).